Consider the following 511-residue polypeptide: DELLA protein RGL1 (511 aa).

A compositionally biased stretch (basic and acidic residues) spans 1–11; sequence MKREHNHRESS. Residues 1 to 20 are disordered; the sequence is MKREHNHRESSAGEGGSSSM. Residues 32 to 36 carry the DELLA motif motif; it reads DELLV. The LEXLE motif motif lies at 54–58; that stretch reads LEQLE. A VHYNP motif motif is present at residues 73–77; the sequence is VHYNP. A GRAS domain is found at 143–506; it reads LDSQETGVRL…RPLIATSAWR (364 aa). The leucine repeat I (LRI) stretch occupies residues 150-204; that stretch reads VRLVHALLACAEAVQQNNLKLADALVKHVGLLASSQAGAMRKVATYFAEGLARRI. The LxCxE motif motif lies at 157–161; the sequence is LACAE. Residues 223 to 288 form a VHIID region; that stretch reads QIHFYESCPY…NGPPDFRLTG (66 aa). Residues 254 to 258 carry the VHIID motif; it reads VHVID. The leucine repeat II (LRII) stretch occupies residues 298-330; the sequence is EVGWKLGQLASTIGVNFEFKSIALNNLSDLKPE. Positions 341–427 are PFYRE; sequence VAVNSVFELH…ELFLGRQILN (87 aa). The short motif at 349-353 is the LXXLL motif element; the sequence is LHRLL. Positions 430-506 are SAW; the sequence is ACEGEDRVER…RPLIATSAWR (77 aa).

Belongs to the GRAS family. DELLA subfamily. Interacts directly with the GID2/SLY1 component of the SCF(GID2) complex. Interacts (via N-terminus) with GID1A, GID1B and GID1B (via N-terminus). Interacts with the BOI proteins BOI, BRG1, BRG2 and BRG3. Binds to and coactivates GAF1/IDD2 and ENY/IDD1. In terms of processing, phosphorylated. Post-translationally, may be ubiquitinated, as suggested by its interaction with GID2. Ubiquitination is however unsure since in contrast to other DELLA proteins, it is not ubiquitinated and degraded upon GA application. Nevertheless, ubiquitination may be triggered by other processes. Predominantly expressed in germinating seeds and flowers and siliques. Highly expressed in inflorescences and weakly or not expressed in rosette leaves, etiolated seedlings, siliques, mature stems and roots. RGA and GAI transcripts were detected at slightly varying levels in all tissues examined. RGL2 signal was undetected, and RGL3 signal was very weak in all tissues examined (rosette leaves, seedlings, inflorescences, and siliques) except inflorescences. In the flower, it is expressed in developing ovules as well as in developing anthers throughout microspore development.

It localises to the nucleus. Probable transcriptional regulator that acts as a repressor of the gibberellin (GA) signaling pathway. No effect of the BOI proteins on its stability. Probably acts by participating in large multiprotein complexes that repress transcription of GA-inducible genes. Has overlapping but distinct roles in GA signaling compared to RGA and GAI. Regulates the floral development. May also participate in seed germination and in ovule and anther development. Its activity is probably regulated by other phytohormones such as auxin and ethylene. The chain is DELLA protein RGL1 (RGL1) from Arabidopsis thaliana (Mouse-ear cress).